The primary structure comprises 378 residues: Dihydroorotate dehydrogenase (quinone) (378 aa).

FMN contacts are provided by residues 79-83 (PGYDK) and Thr103. Residue Lys83 coordinates substrate. 128-132 (NRMGF) contacts substrate. FMN-binding residues include Asn160 and Asn193. Asn193 is a binding site for substrate. Ser196 acts as the Nucleophile in catalysis. Residue Asn198 coordinates substrate. Residues Lys231 and Thr259 each coordinate FMN. A substrate-binding site is contributed by 260 to 261 (NT). Residues Gly289, Gly318, and 339–340 (YT) each bind FMN.

It belongs to the dihydroorotate dehydrogenase family. Type 2 subfamily. Monomer. It depends on FMN as a cofactor.

Its subcellular location is the cell membrane. The catalysed reaction is (S)-dihydroorotate + a quinone = orotate + a quinol. The protein operates within pyrimidine metabolism; UMP biosynthesis via de novo pathway; orotate from (S)-dihydroorotate (quinone route): step 1/1. Catalyzes the conversion of dihydroorotate to orotate with quinone as electron acceptor. The chain is Dihydroorotate dehydrogenase (quinone) from Trichodesmium erythraeum (strain IMS101).